A 599-amino-acid polypeptide reads, in one-letter code: Serine hydroxymethyltransferase 6 (599 aa).

The segment at 1-25 (MDRIAQSDLSLGFGSSHALPLPHPP) is disordered. K374 is subject to N6-(pyridoxal phosphate)lysine.

Belongs to the SHMT family. As to quaternary structure, homotetramer. Pyridoxal 5'-phosphate is required as a cofactor.

The protein resides in the cytoplasm. The catalysed reaction is (6R)-5,10-methylene-5,6,7,8-tetrahydrofolate + glycine + H2O = (6S)-5,6,7,8-tetrahydrofolate + L-serine. Its pathway is one-carbon metabolism; tetrahydrofolate interconversion. Catalyzes the interconversion of serine and glycine. The polypeptide is Serine hydroxymethyltransferase 6 (SHM6) (Arabidopsis thaliana (Mouse-ear cress)).